Here is a 235-residue protein sequence, read N- to C-terminus: MAVELGVLLVRPRPGTGLGRVMRTLLLVLWLATRGSALYFHIGETEKKCFIEEIPDETMVIGNYRTQLYDKQREEYQPATPGLGMFVEVKDPEDKVILARQYGSEGRFTFTSHTPGEHQICLHSNSTKFSLFAGGMLRVHLDIQVGEHANDYAEIAAKDKLSELQLRVRQLVEQVEQIQKEQNYQRWREERFRQTSESTNQRVLWWSILQTLILVAIGVWQMRHLKSFFEAKKLV.

The N-terminal stretch at 1–37 (MAVELGVLLVRPRPGTGLGRVMRTLLLVLWLATRGSA) is a signal peptide. Residues 38-202 (LYFHIGETEK…RQTSESTNQR (165 aa)) are Lumenal-facing. The region spanning 47-145 (KKCFIEEIPD…MLRVHLDIQV (99 aa)) is the GOLD domain. Residues 121–160 (CLHSNSTKFSLFAGGMLRVHLDIQVGEHANDYAEIAAKDK) are required for interaction with STX17. N125 is a glycosylation site (N-linked (GlcNAc...) asparagine). Residues 154-184 (EIAAKDKLSELQLRVRQLVEQVEQIQKEQNY) adopt a coiled-coil conformation. Residue K160 is modified to N6-acetyllysine. A helical membrane pass occupies residues 203–222 (VLWWSILQTLILVAIGVWQM). Over 223–235 (RHLKSFFEAKKLV) the chain is Cytoplasmic. The COPII vesicle coat-binding motif lies at 228–229 (FF). The COPI vesicle coat-binding signature appears at 228 to 235 (FFEAKKLV).

It belongs to the EMP24/GP25L family. Monomer and homodimer in endoplasmic reticulum. Predominantly monomeric and to lesser extent homodimeric in endoplasmic reticulum-Golgi intermediate compartment and cis-Golgi network. Probably oligomerizes with other members of the EMP24/GP25L family such as TMED2, TMED7 and TMED10. Interacts with TMED5. Interacts (via C-terminus) with COPG1; the interaction involves dimeric TMED9. Interacts with PTPN2 and SPAST. Interacts with STX17; the interaction is direct. Post-translationally, N-linked glycosylated containing high mannose.

It is found in the endoplasmic reticulum membrane. The protein localises to the golgi apparatus. Its subcellular location is the cis-Golgi network membrane. It localises to the endoplasmic reticulum-Golgi intermediate compartment membrane. The protein resides in the trans-Golgi network membrane. Functionally, appears to be involved in vesicular protein trafficking, mainly in the early secretory pathway. In COPI vesicle-mediated retrograde transport involved in the coatomer recruitment to membranes of the early secretory pathway. Increases coatomer-dependent activity of ARFGAP2. Thought to play a crucial role in the specific retention of p24 complexes in cis-Golgi membranes; specifically contributes to the coupled localization of TMED2 and TMED10 in the cis-Golgi network. May be involved in organization of intracellular membranes, such as of the ER-Golgi intermediate compartment and the Golgi apparatus. Involved in ER localization of PTPN2 isoform PTPB. The protein is Transmembrane emp24 domain-containing protein 9 (TMED9) of Homo sapiens (Human).